Consider the following 674-residue polypeptide: Amino-acid acetyltransferase, mitochondrial (674 aa).

The N-terminal 50 residues, 1–50, are a transit peptide targeting the mitochondrion; the sequence is MPLVAAMLTRSNGAWKKATSVVQASICRDQQRPNHTTITSVTSVSQRRHF. The span at 33–45 shows a compositional bias: polar residues; it reads PNHTTITSVTSVS. A disordered region spans residues 33 to 74; sequence PNHTTITSVTSVSQRRHFSSAENGAKPSRSHPSAAEAKQKRE. In terms of domain architecture, N-acetyltransferase spans 497–665; it reads GTPRLKLTDT…YEDVCRGVVP (169 aa).

It belongs to the acetyltransferase family.

It is found in the mitochondrion. The enzyme catalyses L-glutamate + acetyl-CoA = N-acetyl-L-glutamate + CoA + H(+). Its pathway is amino-acid biosynthesis; L-arginine biosynthesis; N(2)-acetyl-L-ornithine from L-glutamate: step 1/4. Functionally, N-acetylglutamate synthase involved in arginine biosynthesis. In Podospora anserina (strain S / ATCC MYA-4624 / DSM 980 / FGSC 10383) (Pleurage anserina), this protein is Amino-acid acetyltransferase, mitochondrial (ARG2).